Here is a 199-residue protein sequence, read N- to C-terminus: Elongation factor Ts, chloroplastic (199 aa).

Belongs to the EF-Ts family.

It is found in the plastid. The protein resides in the chloroplast. Its function is as follows. Associates with the EF-Tu.GDP complex and induces the exchange of GDP to GTP. It remains bound to the aminoacyl-tRNA.EF-Tu.GTP complex up to the GTP hydrolysis stage on the ribosome. This Galdieria sulphuraria (Red alga) protein is Elongation factor Ts, chloroplastic (tsf).